Consider the following 261-residue polypeptide: Intermembrane phospholipid transport system permease protein MlaE (261 aa).

Residues 1–12 (MIVNFISALGKQ) are Cytoplasmic-facing. A helical membrane pass occupies residues 13–33 (VIDFFRALGRAGFMLFGALIG). Residues 34-49 (KPQIRKHFPLLVKQMH) are Periplasmic-facing. Residues 50 to 70 (VLGVQSLLIILLSGLFIGMVL) traverse the membrane as a helical segment. Residues 71–147 (GLQGYVVLID…DPLRRVIAPR (77 aa)) lie on the Cytoplasmic side of the membrane. A helical transmembrane segment spans residues 148 to 168 (FWAGVISMPVLSILFIAIGIW). Residues 169 to 198 (GGSLVGVDWKGVDSGSFWSVMQNSVSWSYD) are Periplasmic-facing. Residues 199–219 (ILNGFIKAVFFAVAVTWIALF) form a helical membrane-spanning segment. At 220–238 (NGYDCMPTSEGISQATTRT) the chain is on the cytoplasmic side. A helical transmembrane segment spans residues 239 to 259 (VVHASLVVLGLDFILTAIMFG). Residues 260 to 261 (AG) lie on the Periplasmic side of the membrane.

Belongs to the MlaE permease family. The complex is composed of two ATP-binding proteins (MlaF), two transmembrane proteins (MlaE), two cytoplasmic solute-binding proteins (MlaB) and six periplasmic solute-binding proteins (MlaD).

Its subcellular location is the cell inner membrane. Functionally, part of the ABC transporter complex MlaFEDB, which is involved in a phospholipid transport pathway that maintains lipid asymmetry in the outer membrane by retrograde trafficking of phospholipids from the outer membrane to the inner membrane. Probably responsible for the translocation of the substrate across the membrane. This chain is Intermembrane phospholipid transport system permease protein MlaE, found in Haemophilus influenzae (strain ATCC 51907 / DSM 11121 / KW20 / Rd).